The sequence spans 88 residues: Small ribosomal subunit protein uS17 (88 aa).

The protein belongs to the universal ribosomal protein uS17 family. Part of the 30S ribosomal subunit.

Its function is as follows. One of the primary rRNA binding proteins, it binds specifically to the 5'-end of 16S ribosomal RNA. The polypeptide is Small ribosomal subunit protein uS17 (Pseudomonas putida (strain ATCC 700007 / DSM 6899 / JCM 31910 / BCRC 17059 / LMG 24140 / F1)).